The primary structure comprises 160 residues: Photosystem II extrinsic protein V (160 aa).

Positions 1–25 (MKRFILLAIATVFFFCQFQTNPVNA) are cleaved as a signal peptide. Residues cysteine 62, cysteine 65, histidine 66, and histidine 117 each coordinate heme c.

The protein belongs to the cytochrome c family. PsbV subfamily. In terms of assembly, PSII is composed of 1 copy each of membrane proteins PsbA, PsbB, PsbC, PsbD, PsbE, PsbF, PsbH, PsbI, PsbJ, PsbK, PsbL, PsbM, PsbT, PsbX, PsbY, PsbZ, Psb30/Ycf12, peripheral proteins PsbO, CyanoQ (PsbQ), PsbU, PsbV and a large number of cofactors. It forms dimeric complexes. Heme c is required as a cofactor.

The protein resides in the cellular thylakoid membrane. One of the extrinsic, lumenal subunits of photosystem II (PSII). PSII is a light-driven water plastoquinone oxidoreductase, using light energy to abstract electrons from H(2)O, generating a proton gradient subsequently used for ATP formation. The extrinsic proteins stabilize the structure of photosystem II oxygen-evolving complex (OEC), the ion environment of oxygen evolution and protect the OEC against heat-induced inactivation. Low-potential cytochrome c that plays a role in the OEC of PSII. This is Photosystem II extrinsic protein V from Rippkaea orientalis (strain PCC 8801 / RF-1) (Cyanothece sp. (strain PCC 8801)).